The chain runs to 183 residues: Ribosome maturation factor RimM (183 aa).

The 81-residue stretch at Glu-103–Phe-183 folds into the PRC barrel domain.

It belongs to the RimM family. Binds ribosomal protein uS19.

The protein resides in the cytoplasm. An accessory protein needed during the final step in the assembly of 30S ribosomal subunit, possibly for assembly of the head region. Essential for efficient processing of 16S rRNA. May be needed both before and after RbfA during the maturation of 16S rRNA. It has affinity for free ribosomal 30S subunits but not for 70S ribosomes. The sequence is that of Ribosome maturation factor RimM from Escherichia coli O157:H7 (strain EC4115 / EHEC).